The sequence spans 1604 residues: E3 ubiquitin-protein ligase HECW1 (1604 aa).

A C2 domain is found at 182 to 318 (SAAPIFKGIG…LERHAIGDRV (137 aa)). Disordered stretches follow at residues 350–539 (DEEI…CSLP), 572–604 (PSAQ…LSEV), 642–667 (GIGA…QQGA), and 727–826 (STVF…TIDE). Over residues 362-380 (SAETQDSIMNSMVGNSNGE) the composition is skewed to polar residues. The span at 387–396 (EFCKDAKPES) shows a compositional bias: basic and acidic residues. Residues 398–412 (SEGNGVNSSENQNQE) show a composition bias toward polar residues. Acidic residues-rich tracts occupy residues 435–444 (APEEPGELQD) and 458–469 (EVAEGLPLDEDS). Positions 494–505 (GAREEEMQKGKD) are enriched in basic and acidic residues. The segment covering 580 to 589 (TEEEDGLEEE) has biased composition (acidic residues). Residues 590 to 601 (STLKESSEKDGL) show a composition bias toward basic and acidic residues. Composition is skewed to polar residues over residues 654–667 (STGS…QQGA), 748–762 (DSVQ…STNG), and 803–812 (HNSQPISQLP). Residues 826 to 859 (EPLPPNWEARIDSHGRVFYVDHINRTTTWQRPSM) enclose the WW 1 domain. The residue at position 871 (S871) is a Phosphoserine. Residues 871–898 (SVHQMEQLNRRYQNIQRTMATERAEEDS) are a coiled coil. Positions 890–936 (ATERAEEDSGNQNSEQIPDGGGGGGGGSDSEAESSQSSLDLRREGSL) are disordered. Residues 908-917 (DGGGGGGGGS) are compositionally biased toward gly residues. Phosphoserine is present on residues S935 and S937. The WW 2 domain occupies 1016–1049 (LELPRGWEIKTDHQGKSFFVDHNSRATTFIDPRI). The HECT domain occupies 1269-1604 (SRKELQRNKL…VEETSTFGLE (336 aa)). The Glycyl thioester intermediate role is filled by C1572.

In terms of assembly, interacts with DVL1 and SSR3. Predominantly expressed in neurons of the spinal cord.

It is found in the cytoplasm. The catalysed reaction is S-ubiquitinyl-[E2 ubiquitin-conjugating enzyme]-L-cysteine + [acceptor protein]-L-lysine = [E2 ubiquitin-conjugating enzyme]-L-cysteine + N(6)-ubiquitinyl-[acceptor protein]-L-lysine.. It functions in the pathway protein modification; protein ubiquitination. Its function is as follows. E3 ubiquitin-protein ligase that mediates ubiquitination and subsequent degradation of DVL1. This Mus musculus (Mouse) protein is E3 ubiquitin-protein ligase HECW1 (Hecw1).